The following is a 504-amino-acid chain: Myocilin (504 aa).

An N-terminal signal peptide occupies residues 1–32 (MRFFCARCCSFGPEMPAVQLLLLACLVWDVGA). N-linked (GlcNAc...) asparagine glycosylation occurs at Asn-57. Residues 74–184 (LQRDSSTQRL…QEVARLRRGQ (111 aa)) adopt a coiled-coil conformation. 2 disordered regions span residues 106–131 (QAAR…RDQL) and 170–200 (LESS…PGSR). Residues 122-131 (GTLRRERDQL) are compositionally biased toward basic and acidic residues. Residues 244–503 (GCGELVWVGE…MVTYDIKLSK (260 aa)) enclose the Olfactomedin-like domain. A disulfide bond links Cys-245 and Cys-433. 5 residues coordinate Ca(2+): Asp-380, Asn-428, Ala-429, Ile-477, and Asp-478. Residues 502–504 (SKM) carry the Microbody targeting signal motif.

As to quaternary structure, homodimer (via N-terminus). Can also form higher oligomers. Interacts with OLFM3, FN1, NRCAM, GLDN and NFASC. Interacts (via N-terminus) with MYL2. Interacts with SFRP1, FRZB, FZD7, FZD10, FZD1 and WIF1; regulates Wnt signaling. Interacts with SNTA1; regulates muscle hypertrophy. Interacts with ERBB2 and ERBB3; activates ERBB2-ERBB3 signaling pathway. Interacts with SNCG; affects its secretion and its aggregation. In terms of processing, different isoforms may arise by post-translational modifications. Glycosylated. Post-translationally, palmitoylated. In terms of processing, undergoes a calcium-dependent proteolytic cleavage at Arg-226 by CAPN2 in the endoplasmic reticulum. The result is the production of two fragments, one of 35 kDa containing the C-terminal olfactomedin-like domain, and another of 20 kDa containing the N-terminal leucine zipper-like domain. In terms of tissue distribution, detected in aqueous humor. Detected in the eye (at protein level). Widely expressed. Highly expressed in various types of muscle, ciliary body, papillary sphincter, skeletal muscle, heart, and bone marrow-derived mesenchymal stem cells. Expressed predominantly in the retina. In normal eyes, found in the inner uveal meshwork region and the anterior portion of the meshwork. In contrast, in many glaucomatous eyes, it is found in more regions of the meshwork and seems to be expressed at higher levels than in normal eyes, regardless of the type or clinical severity of glaucoma. The myocilin 35 kDa fragment is detected in aqueous humor and to a lesser extent in iris and ciliary body.

It is found in the secreted. It localises to the golgi apparatus. The protein localises to the cytoplasmic vesicle. The protein resides in the extracellular space. Its subcellular location is the extracellular matrix. It is found in the extracellular exosome. It localises to the mitochondrion. The protein localises to the mitochondrion intermembrane space. The protein resides in the mitochondrion inner membrane. Its subcellular location is the mitochondrion outer membrane. It is found in the rough endoplasmic reticulum. It localises to the cell projection. The protein localises to the cilium. The protein resides in the endoplasmic reticulum. Its function is as follows. Secreted glycoprotein regulating the activation of different signaling pathways in adjacent cells to control different processes including cell adhesion, cell-matrix adhesion, cytoskeleton organization and cell migration. Promotes substrate adhesion, spreading and formation of focal contacts. Negatively regulates cell-matrix adhesion and stress fiber assembly through Rho protein signal transduction. Modulates the organization of actin cytoskeleton by stimulating the formation of stress fibers through interactions with components of Wnt signaling pathways. Promotes cell migration through activation of PTK2 and the downstream phosphatidylinositol 3-kinase signaling. Plays a role in bone formation and promotes osteoblast differentiation in a dose-dependent manner through mitogen-activated protein kinase signaling. Mediates myelination in the peripheral nervous system through ERBB2/ERBB3 signaling. Plays a role as a regulator of muscle hypertrophy through the components of dystrophin-associated protein complex. Involved in positive regulation of mitochondrial depolarization. Plays a role in neurite outgrowth. May participate in the obstruction of fluid outflow in the trabecular meshwork. This Homo sapiens (Human) protein is Myocilin (MYOC).